Reading from the N-terminus, the 40-residue chain is Large ribosomal subunit protein bL36 (40 aa).

This sequence belongs to the bacterial ribosomal protein bL36 family.

This Corynebacterium aurimucosum (strain ATCC 700975 / DSM 44827 / CIP 107346 / CN-1) (Corynebacterium nigricans) protein is Large ribosomal subunit protein bL36.